The following is an 87-amino-acid chain: Toxin CsEv2 (87 aa).

A signal peptide spans 1 to 19 (MNSLLIITACLFLIGTVWA). The 66-residue stretch at 20–85 (KEGYLVNKST…TYPLPNKSCS (66 aa)) folds into the LCN-type CS-alpha/beta domain. 4 disulfide bridges follow: Cys31/Cys84, Cys35/Cys60, Cys44/Cys65, and Cys48/Cys67.

Belongs to the long (4 C-C) scorpion toxin superfamily. Sodium channel inhibitor family. Beta subfamily. In terms of tissue distribution, expressed by the venom gland.

The protein localises to the secreted. In terms of biological role, beta toxins bind voltage-independently at site-4 of sodium channels (Nav) and shift the voltage of activation toward more negative potentials thereby affecting sodium channel activation and promoting spontaneous and repetitive firing. Induces immediate paralysis in crickets after injection, with a total paralysis occurring within 15-30 minutes and lasting for 1-2 hours. Is also lethal to vertebrate (chicks) when injected in very high dosages (more that 100 mg/kg). The sequence is that of Toxin CsEv2 from Centruroides sculpturatus (Arizona bark scorpion).